We begin with the raw amino-acid sequence, 1563 residues long: MSSKEVKTALKSARDAIRNKEYKEALKHCKTVLKQEKNNYNAWVFIGVAAAELEQPDQAQGAYKKAAELEPEQLLAWQGLASLYEKCNQVNAKDDLPGVYQKLLDLYESADRQKWCDVCKKLVALYHQEKKHLEVARTWHRLIKTRQEDGADRQELYELWRKLSQLLAENIEDQNNETQQMLLTAFENALDLADNIPSEDHQVLYRNFIQCLSKFPHETTKLKKACEEMIAIYPTVQYPLEVICLYLIDSGSLTSEGHQYCCKLVEMNSKSGPGLIGLGIIALQDKKYEDAVRHLTEGLKESPVCIAGWCHLAEAQVKMHRPKEAILSCNQALKTIDNFGASGGNLHQKNLCLRLKAEALLKLSDGASSEEAVRTLDQVSDVDNTPGLLVLQGLACLNTGAVDKATKIMEDLVTSYPDLAEAHALEGRVHFTKKDYVQAEVSFQRALEKDAEVAEYHYQLGLTYWFMGEETRKDKTKALTHFLKAARLDAHMGKVFCYLGHYYRDVAGDRNRARGCYRKAFELDDNDAESGAAAVDLSLELEDTETALAILTAVTQKASAGAAKWAWLRRGLYHLKAGQHSQAVADLQAALRADPKDCNCWESLGEAYLSRGGYTTALKSFMKASELNPDSTYSVFKVAAIQQILGRYSEAIAQYQLIIKMKEDYVPALKGLGECHLLLGKVALVDFLDGKAVDYVEQALGYFTRALQHRADVSCLWKLVGDACTCLHPVSPSKVHVHVLGALLGQKEGQEVLKKEELLSLGGRCYGRALKLMSTSNTWCDLGINYYRQVQHLAETGSSMSDLTELLEKSLHCLKKAVRLDSNNHLHWNALGVVACYRGVGNYALAQHCFIKSIQAEQINAAAWTNLGVLYLATENIEQAHEAFKMAQSLDPSYLLCWIGQALIAERVGSYDTMDLFRHTTELSMHTEGAIGYAYWVCTTLQDKSNRETELYQYNILEMNAIPAAQGVLCKYVERIQNSASAFTMLGYLNEHLQLKKEAAEAYQRATTLLHSAEDQNTYNVAVRNWGRLLCSIGDYDRAIQAFKSTPLVELEDIIGFALALFMKGLYKESGSAYERALAVCKSEQDKAHILTAMAIVEYKQGKMDAAKSFLFKCSILKEPTAESLQALCALGLAMRDATLSKAALNELLKHIKRRNDYHSCLLMSAIYALQGHSVAVQRQVAKAVHSNPADPALWSLLSRIVAQYTQRSAKGGAVAGNVAHILDLNHGKKALLYTAVNQLAMGSSTAEDKSNTALKTIQKAAFLSPDDPAVWAGLMAACHADDKLALLNNTQPKRVDLYLALRSAVAASLKDKEILQNYNQSLEKWSFSQVVTGLIDTGKTSEAESLCTQSLKSNPDQPAVILLLRQVQCMSLLESQKPLPDAVLEELQKTVMSNSTSVPAWQWLAQVYQSQGMMGAAEMCYRKSLQVASQQGNWSGKLSSLLKLALLALEVCMANVSGDHWSSLVQEATSEALKVCFSPLAVFLQALLQFNRKMGARETRRLLERIVYQTGYPSSIVSAARWYLLRHLYAKDDPELIDVLVRNAETHGDKRILELNRKLSAQ.

The residue at position 2 (Ser-2) is an N-acetylserine. 22 TPR repeats span residues Val-6 to Asn-39, Tyr-40 to Gln-73, Tyr-157 to Ile-196, Gly-272 to Cys-305, Ala-307 to Phe-339, Pro-386 to Leu-419, Ala-420 to Val-453, Glu-455 to Met-492, Gly-493 to Asp-527, Lys-564 to Asp-597, Cys-598 to Ser-631, Thr-632 to Tyr-665, Tyr-633 to Tyr-665, Gly-673 to Val-713, Val-790 to Asn-824, Leu-826 to Asn-860, Ala-861 to Tyr-894, Ala-980 to Ala-1013, Asn-1020 to Asp-1053, Ile-1055 to Glu-1084, Lys-1325 to Gln-1358, and Val-1399 to Gln-1432.

This sequence belongs to the SKI3 family. In terms of assembly, component of the SKI complex which consists of SKIC2, SKIC3 and SKIC8. Interacts with PAF1.

It is found in the cytoplasm. The protein resides in the nucleus. In terms of biological role, component of the SKI complex, a multiprotein complex that assists the RNA-degrading exosome during the mRNA decay and quality-control pathways. The SKI complex catalyzes mRNA extraction from 80S ribosomal complexes in the 3'-5' direction and channels mRNA to the cytosolic exosome for degradation. SKI-mediated extraction of mRNA from stalled ribosomes allow binding of the Pelota-HBS1L complex and subsequent ribosome disassembly by ABCE1 for ribosome recycling. In the nucleus, the SKI complex associates with transcriptionally active genes in a manner dependent on PAF1 complex (PAF1C). This chain is Superkiller complex protein 3, found in Mus musculus (Mouse).